Consider the following 674-residue polypeptide: Kelch repeat and BTB domain-containing protein 6 (674 aa).

Residues 1–28 (MQSREDAPRSRRLASPRGGKRPKKIHKP) form a disordered region. Basic residues predominate over residues 10 to 27 (SRRLASPRGGKRPKKIHK). Positions 63–138 (CDVTIEVVTP…CYTGRVSLSE (76 aa)) constitute a BTB domain. Kelch repeat units lie at residues 386-435 (AVCI…YLNG), 436-484 (YIYI…VIRD), 486-523 (LYALNSKRMFCYDPSHNMWLKCVSLKRNDFQEACVFNE), 524-564 (EIYC…IIKH), 567-616 (KLLL…CLSA), and 642-673 (TEWDLGGFSEPDSESGSSSSLSDDDFWVRVAP). Residues 631–674 (TEEEEIPSESSTEWDLGGFSEPDSESGSSSSLSDDDFWVRVAPQ) form a disordered region. An ATG8 interaction motif (AIM) motif is present at residues 668–671 (WVRV).

Core component of a BCR3 (BTB-CUL3-RBX1) E3 ubiquitin ligase complex, also named Cul3-RING ubiquitin ligase complex CUL3(KBTBD6/7), composed of CUL3, RBX1, KBTBD6 and KBTBD7. Interacts with GABARAP; the interaction is direct and is required for the ubiquitination of TIAM1. Interacts with GABARAPL1, GABARAPL2 and MAP1LC3B; the interaction is direct.

The protein resides in the cytoplasm. It localises to the nucleus. The protein operates within protein modification; protein ubiquitination. Functionally, as part of the CUL3(KBTBD6/7) E3 ubiquitin ligase complex functions as a substrate adapter for the RAC1 guanine exchange factor (GEF) TIAM1, mediating its 'Lys-48' ubiquitination and proteasomal degradation. By controlling this ubiquitination, regulates RAC1 signal transduction and downstream biological processes including the organization of the cytoskeleton, cell migration and cell proliferation. Ubiquitination of TIAM1 requires the membrane-associated protein GABARAP which may restrict locally the activity of the complex. The chain is Kelch repeat and BTB domain-containing protein 6 from Homo sapiens (Human).